The primary structure comprises 215 residues: Heart- and neural crest derivatives-expressed protein 1 (215 aa).

Disordered regions lie at residues Ala53–Ser109 and Leu166–Ile198. The span at Ala65–Gly89 shows a compositional bias: low complexity. Over residues Leu92–Arg104 the composition is skewed to basic residues. Residues Arg94–Leu146 form the bHLH domain. Thr107 bears the Phosphothreonine; by PLK4 mark. A Phosphoserine; by PLK4 modification is found at Ser109.

Efficient DNA binding requires dimerization with another bHLH protein. Forms homodimers and heterodimers with TCF3 gene products E12 and E47, HAND2 and HEY1, HEY2 and HEYL (hairy-related transcription factors). Interacts with MDFIC. Interacts with SOX15; the interaction enhances HAND1-induced differentiation of trophoblast giant cells. Post-translationally, phosphorylation by PLK4 disrupts the interaction with MDFIC and leads to translocation into the nucleoplasm, allowing dimerization and transcription factor activity. As to expression, heart.

It localises to the nucleus. The protein resides in the nucleoplasm. The protein localises to the nucleolus. In terms of biological role, transcription factor that plays an essential role in both trophoblast giant cell differentiation and in cardiac morphogenesis. Binds the DNA sequence 5'-NRTCTG-3' (non-canonical E-box). Acts as a transcriptional repressor of SOX15. In the adult, could be required for ongoing expression of cardiac-specific genes. This Homo sapiens (Human) protein is Heart- and neural crest derivatives-expressed protein 1 (HAND1).